Here is a 962-residue protein sequence, read N- to C-terminus: AP2-associated protein kinase 1 (962 aa).

Met1 carries the N-acetylmethionine modification. The segment covering 1–11 (MKKFFDSRREQ) has biased composition (basic and acidic residues). The segment at 1 to 27 (MKKFFDSRREQGSSGLGSGSSGGGGSS) is disordered. Position 14 is a phosphoserine (Ser14). The segment covering 14–27 (SGLGSGSSGGGGSS) has biased composition (gly residues). The Protein kinase domain maps to 46–314 (VTVDEVLAEG…QVSYFSFKLL (269 aa)). ATP-binding positions include 52–60 (LAEGGFALV) and Lys74. Residue Asp176 is the Proton acceptor of the active site. Tyr234 carries the post-translational modification Phosphotyrosine. The residue at position 235 (Ser235) is a Phosphoserine. Disordered regions lie at residues 325-515 (NSPI…QFQA) and 576-633 (PQAQ…RAGH). Phosphothreonine is present on residues Thr353 and Thr388. Arg390 carries the post-translational modification Omega-N-methylarginine. Over residues 397-418 (PLPQATGPSNQPSLLASVSQPK) the composition is skewed to polar residues. Residues 419–434 (AQATPSQPLQSSQPKQ) are compositionally biased toward low complexity. Residues 435–444 (PQAPPTPQQT) are compositionally biased toward pro residues. The residue at position 440 (Thr440) is a Phosphothreonine. 3 stretches are compositionally biased toward low complexity: residues 445–485 (PAPQ…QPQQ), 498–514 (QQQQPQQQQAQTQQQFQ), and 576–606 (PQAQPATAPQAAAAQEPQIQAPARQQPKVQT). The residue at position 607 (Thr607) is a Phosphothreonine. Polar residues predominate over residues 614-628 (GQKVGSLTPPSSPKT). Residue Ser619 is modified to Phosphoserine. A Phosphothreonine modification is found at Thr621. Ser624, Ser625, Ser638, and Ser651 each carry phosphoserine. Thr654 is modified (phosphothreonine). Low complexity predominate over residues 664–677 (ASLSKSKSATTTPS). Residues 664-702 (ASLSKSKSATTTPSGSPRTSQQNVSNASEGSTWNPFDDD) form a disordered region. Over residues 678–697 (GSPRTSQQNVSNASEGSTWN) the composition is skewed to polar residues. Residues Ser732, Ser847, Ser938, and Ser939 each carry the phosphoserine modification. Residues 824–961 (EKADAAVESL…SLLLVDQLID (138 aa)) form a clathrin-binding domain (CBD) region. 2 disordered regions span residues 839–860 (PPVAQRLPSHTESVTSNRTDSL) and 925–946 (LITKNTQGGHSRNSSGSSESSL). A compositionally biased stretch (polar residues) spans 846–860 (PSHTESVTSNRTDSL). The span at 932 to 945 (GGHSRNSSGSSESS) shows a compositional bias: low complexity.

It belongs to the protein kinase superfamily. Ser/Thr protein kinase family. In terms of assembly, interacts (via CBD domain) with clathrin. Interacts with AP-2 complex. Interacts with NUMB. Interacts with alpha-adaptin. Interacts with EPS15. Interacts with membrane-bound activated NOTCH1 but not with the inactive full-length form of NOTCH1. Preferentially interacts with monoubiquitinated activated NOTCH1 compared to the non-ubiquitinated form. Autophosphorylated.

The protein localises to the cell membrane. Its subcellular location is the membrane. It is found in the clathrin-coated pit. It localises to the presynapse. The catalysed reaction is L-seryl-[protein] + ATP = O-phospho-L-seryl-[protein] + ADP + H(+). It carries out the reaction L-threonyl-[protein] + ATP = O-phospho-L-threonyl-[protein] + ADP + H(+). With respect to regulation, stimulated by clathrin. Functionally, regulates clathrin-mediated endocytosis by phosphorylating the AP2M1/mu2 subunit of the adaptor protein complex 2 (AP-2) which ensures high affinity binding of AP-2 to cargo membrane proteins during the initial stages of endocytosis. Preferentially, may phosphorylate substrates on threonine residues. Regulates phosphorylation of other AP-2 subunits as well as AP-2 localization and AP-2-mediated internalization of ligand complexes. Phosphorylates NUMB and regulates its cellular localization, promoting NUMB localization to endosomes. Binds to and stabilizes the activated form of NOTCH1, increases its localization in endosomes and regulates its transcriptional activity. This is AP2-associated protein kinase 1 (Aak1) from Rattus norvegicus (Rat).